Reading from the N-terminus, the 133-residue chain is Small ribosomal subunit protein bS18 (133 aa).

Residues methionine 1 to phenylalanine 63 are disordered. Gly residues predominate over residues proline 9–arginine 39. A compositionally biased stretch (basic and acidic residues) spans glycine 40–glycine 59.

Belongs to the bacterial ribosomal protein bS18 family. As to quaternary structure, part of the 30S ribosomal subunit. Forms a tight heterodimer with protein bS6.

Its function is as follows. Binds as a heterodimer with protein bS6 to the central domain of the 16S rRNA, where it helps stabilize the platform of the 30S subunit. This chain is Small ribosomal subunit protein bS18, found in Anaeromyxobacter dehalogenans (strain 2CP-1 / ATCC BAA-258).